We begin with the raw amino-acid sequence, 127 residues long: UPF0325 protein VS_2356 (127 aa).

This sequence belongs to the UPF0325 family.

The sequence is that of UPF0325 protein VS_2356 from Vibrio atlanticus (strain LGP32) (Vibrio splendidus (strain Mel32)).